A 194-amino-acid polypeptide reads, in one-letter code: MRYPESLLKLTRALSRLPGIGPKTAQRLALHLAFHKEEAEALAEALEGLKRVRACRECGNLAEGELCPICQDEDRDRSLLAVVESVADLYALERSGEFRGLYHVLGGALNPLEGIGPKELNLEGLFRRLEGVEEVVLATSMTVEGEATALYLAEELKKRGVRVTRPAYGLPVGGSLEYADEVTLGRALEGRRPV.

The segment at cysteine 55–cysteine 70 adopts a C4-type zinc-finger fold. Residues serine 78–proline 171 enclose the Toprim domain.

This sequence belongs to the RecR family.

May play a role in DNA repair. It seems to be involved in an RecBC-independent recombinational process of DNA repair. It may act with RecF and RecO. The polypeptide is Recombination protein RecR (Thermus thermophilus (strain ATCC BAA-163 / DSM 7039 / HB27)).